The sequence spans 150 residues: Ribosomal RNA large subunit methyltransferase H (150 aa).

Residues Ile-71, Ala-100, and 118–123 (LSEMTF) each bind S-adenosyl-L-methionine.

It belongs to the RNA methyltransferase RlmH family. In terms of assembly, homodimer.

Its subcellular location is the cytoplasm. It catalyses the reaction pseudouridine(1915) in 23S rRNA + S-adenosyl-L-methionine = N(3)-methylpseudouridine(1915) in 23S rRNA + S-adenosyl-L-homocysteine + H(+). In terms of biological role, specifically methylates the pseudouridine at position 1915 (m3Psi1915) in 23S rRNA. This is Ribosomal RNA large subunit methyltransferase H from Helicobacter acinonychis (strain Sheeba).